A 184-amino-acid polypeptide reads, in one-letter code: Trichothecene 15-O-acetyltransferase SAT16 (184 aa).

His-154 is a binding site for substrate.

Belongs to the trichothecene O-acetyltransferase family.

Its pathway is mycotoxin biosynthesis. In terms of biological role, trichothecene 15-O-acetyltransferase; part of the satratoxin SC2 cluster involved in the biosynthesis of satratoxins, trichothecene mycotoxins that are associated with human food poisonings. Satratoxins are suggested to be made by products of multiple gene clusters (SC1, SC2 and SC3) that encode 21 proteins in all, including polyketide synthases, acetyltransferases, and other enzymes expected to modify the trichothecene skeleton. SC1 encodes 10 proteins, SAT1 to SAT10. The largest are SAT8, which encodes a putative polyketide synthase (PKS) with a conventional non-reducing architecture, and SAT10, a putative protein containing four ankyrin repeats and thus may be involved in protein scaffolding. The putative short-chain reductase SAT3 may assist the PKS in some capacity. SAT6 contains a secretory lipase domain and acts probably as a trichothecene esterase. SAT5 encodes a putative acetyltransferase, and so, with SAT6, may affect endogenous protection from toxicity. The probable transcription factor SAT9 may regulate the expression of the SC1 cluster. SC2 encodes proteins SAT11 to SAT16, the largest of which encodes the putative reducing PKS SAT13. SAT11 is a cytochrome P450 monooxygenase, while SAT14 and SAT16 are probable acetyltransferases. The SC2 cluster may be regulated by the transcription factor SAT15. SC3 is a small cluster that encodes 5 proteins, SAT17 to SAT21. SAT21 is a putative MFS-type transporter which may have a role in exporting secondary metabolites. The four other proteins putatively encoded in SC3 include the taurine hydroxylase-like protein SAT17, the O-methyltransferase SAT18, the acetyltransferase SAT19, and the Cys6-type zinc finger SAT20, the latter being probably involved in regulation of SC3 expression. The sequence is that of Trichothecene 15-O-acetyltransferase SAT16 from Stachybotrys chartarum (strain CBS 109288 / IBT 7711) (Toxic black mold).